The sequence spans 137 residues: Large ribosomal subunit protein uL16 (137 aa).

Belongs to the universal ribosomal protein uL16 family. As to quaternary structure, part of the 50S ribosomal subunit.

In terms of biological role, binds 23S rRNA and is also seen to make contacts with the A and possibly P site tRNAs. The polypeptide is Large ribosomal subunit protein uL16 (Acinetobacter baumannii (strain SDF)).